A 229-amino-acid polypeptide reads, in one-letter code: Flagellar L-ring protein (229 aa).

The signal sequence occupies residues 1–25 (MKQVRLLPSAPVRAVCALAVAALAG). Cysteine 26 is lipidated: N-palmitoyl cysteine. Cysteine 26 is lipidated: S-diacylglycerol cysteine.

This sequence belongs to the FlgH family. The basal body constitutes a major portion of the flagellar organelle and consists of four rings (L,P,S, and M) mounted on a central rod.

Its subcellular location is the cell outer membrane. It is found in the bacterial flagellum basal body. Its function is as follows. Assembles around the rod to form the L-ring and probably protects the motor/basal body from shearing forces during rotation. This is Flagellar L-ring protein from Burkholderia ambifaria (strain MC40-6).